The sequence spans 278 residues: Gasdermin-like protein het-Q1 (278 aa).

Belongs to the gasdermin family. Homooligomer; forms a homooligomeric ring-shaped pore complex when inserted in the membrane. The precursor form is cleaved by het-Q2, generating the pore-forming protein (Gasdermin-like protein het-Q1, N-terminal).

It localises to the cell membrane. Its function is as follows. Gasdermin-like protein involved in heterokaryon incompatibility, a process that ensures that during spontaneous vegetative cell fusion, only compatible cells from the same colony survive (non-self-recognition). In P.anserina, the het-q locus exists as 2 incompatible alleles, het-Q1 (this entry) and het-Q2 (AC P0DW09). This form constitutes the precursor of the pore-forming protein: during the allorecognition process, it is cleaved by het-Q2, releasing the N-terminal moiety (Gasdermin-like protein het-Q1, N-terminal) that binds to membranes and forms pores, triggering cell death. Functionally, pore-forming protein that causes membrane permeabilization and cell death. Released upon cleavage and maturation by het-Q2 and binds to membrane inner leaflet lipids. Homooligomerizes within the membrane and forms pores of 10-15 nanometers (nm) of inner diameter, triggering cell death. This Podospora anserina (strain S / ATCC MYA-4624 / DSM 980 / FGSC 10383) (Pleurage anserina) protein is Gasdermin-like protein het-Q1.